Reading from the N-terminus, the 501-residue chain is Cystine/glutamate transporter (501 aa).

The Cytoplasmic portion of the chain corresponds to Met-1 to Lys-43. A Phosphoserine modification is found at Ser-26. The helical transmembrane segment at Val-44 to Ile-64 threads the bilayer. Residues Ser-65–Gly-74 lie on the Extracellular side of the membrane. A helical transmembrane segment spans residues Ser-75 to Leu-95. Over Ser-96–Gly-101 the chain is Cytoplasmic. An intramembrane segment occupies Thr-102–Glu-116. The Cytoplasmic segment spans residues Val-117–Glu-130. A helical transmembrane segment spans residues Leu-131–Ile-150. Arg-135 serves as a coordination point for L-glutamate. The Extracellular segment spans residues Leu-151 to Leu-163. The helical transmembrane segment at Ala-164 to Leu-179 threads the bilayer. The Cytoplasmic segment spans residues Asn-180 to Phe-193. The helical transmembrane segment at Leu-194–Val-210 threads the bilayer. Topologically, residues Met-211–Arg-234 are extracellular. Residues Leu-235–Val-255 form a helical membrane-spanning segment. Tyr-244 serves as a coordination point for L-glutamate. The Cytoplasmic segment spans residues Thr-256–Thr-265. Residues Ile-266–Val-286 form a helical membrane-spanning segment. The Extracellular segment spans residues Ala-287–Leu-317. Asn-314 carries N-linked (GlcNAc...) asparagine glycosylation. Residues Ala-318–Val-338 traverse the membrane as a helical segment. Over Ser-339 to Thr-364 the chain is Cytoplasmic. A helical membrane pass occupies residues Pro-365–Leu-385. Residues Asp-386–Ser-387 are Extracellular-facing. Residues Leu-388–Ile-408 form a helical membrane-spanning segment. Residues Tyr-409–Lys-422 are Cytoplasmic-facing. The helical transmembrane segment at Val-423–Leu-443 threads the bilayer. Topologically, residues Tyr-444–Ser-449 are extracellular. The chain crosses the membrane as a helical span at residues Thr-450–Trp-470. Over Asp-471 to Leu-501 the chain is Cytoplasmic.

This sequence belongs to the amino acid-polyamine-organocation (APC) superfamily. L-type amino acid transporter (LAT) (TC 2.A.3.8) family. In terms of assembly, disulfide-linked heterodimer with the amino acid transport protein SLC3A2/4F2hc; this interaction mediates cell membrane localization.

The protein resides in the cell membrane. The protein localises to the cell projection. It localises to the microvillus membrane. It catalyses the reaction L-cystine(out) + L-glutamate(in) = L-cystine(in) + L-glutamate(out). The enzyme catalyses an L-alpha-amino acid(in) + L-kynurenine(out) = an L-alpha-amino acid(out) + L-kynurenine(in). The catalysed reaction is N-acetyl-L-cysteine(out) + L-glutamate(in) = N-acetyl-L-cysteine(in) + L-glutamate(out). Functionally, heterodimer with SLC3A2, that functions as an antiporter by mediating the exchange of extracellular anionic L-cystine and intracellular L-glutamate across the cellular plasma membrane. Provides L-cystine for the maintenance of the redox balance between extracellular L-cystine and L-cysteine and for the maintenance of the intracellular levels of glutathione that is essential for cells protection from oxidative stress. The transport is sodium-independent, electroneutral with a stoichiometry of 1:1, and is drove by the high intracellular concentration of L-glutamate and the intracellular reduction of L-cystine. In addition, mediates the import of L-kynurenine leading to anti-ferroptotic signaling propagation required to maintain L-cystine and glutathione homeostasis. Moreover, mediates N-acetyl-L-cysteine uptake into the placenta leading to subsequently down-regulation of pathways associated with oxidative stress, inflammation and apoptosis. In vitro can also transport L-aspartate. May participate in astrocyte and meningeal cell proliferation during development and can provide neuroprotection by promoting glutathione synthesis and delivery from non-neuronal cells such as astrocytes and meningeal cells to immature neurons. Controls the production of pheomelanin pigment directly. This chain is Cystine/glutamate transporter, found in Pongo abelii (Sumatran orangutan).